The chain runs to 267 residues: 5'-nucleotidase SurE (267 aa).

A divalent metal cation contacts are provided by aspartate 9, aspartate 10, serine 40, and asparagine 97.

Belongs to the SurE nucleotidase family. The cofactor is a divalent metal cation.

The protein localises to the cytoplasm. The enzyme catalyses a ribonucleoside 5'-phosphate + H2O = a ribonucleoside + phosphate. Its function is as follows. Nucleotidase that shows phosphatase activity on nucleoside 5'-monophosphates. This Helicobacter pylori (strain J99 / ATCC 700824) (Campylobacter pylori J99) protein is 5'-nucleotidase SurE.